A 501-amino-acid chain; its full sequence is Protein MGF 505-4R (501 aa).

This sequence belongs to the asfivirus MGF 505 family.

Functionally, plays a role in virus cell tropism, and may be required for efficient virus replication in macrophages. The chain is Protein MGF 505-4R from African swine fever virus (isolate Tick/South Africa/Pretoriuskop Pr4/1996) (ASFV).